Consider the following 259-residue polypeptide: 3-deoxy-manno-octulosonate cytidylyltransferase (259 aa).

It belongs to the KdsB family.

It is found in the cytoplasm. The enzyme catalyses 3-deoxy-alpha-D-manno-oct-2-ulosonate + CTP = CMP-3-deoxy-beta-D-manno-octulosonate + diphosphate. It functions in the pathway nucleotide-sugar biosynthesis; CMP-3-deoxy-D-manno-octulosonate biosynthesis; CMP-3-deoxy-D-manno-octulosonate from 3-deoxy-D-manno-octulosonate and CTP: step 1/1. It participates in bacterial outer membrane biogenesis; lipopolysaccharide biosynthesis. Functionally, activates KDO (a required 8-carbon sugar) for incorporation into bacterial lipopolysaccharide in Gram-negative bacteria. This Maricaulis maris (strain MCS10) (Caulobacter maris) protein is 3-deoxy-manno-octulosonate cytidylyltransferase.